The primary structure comprises 413 residues: Scarecrow-like protein 21 (413 aa).

The GRAS domain maps to 41-413 (IVEAISRGDL…RILVSSCAWK (373 aa)). The leucine repeat I (LRI) stretch occupies residues 48-108 (GDLKLVLVAC…VARLAASGSS (61 aa)). The interval 127-192 (VYVLHEVCPY…GGAPNIRITG (66 aa)) is VHIID. A VHIID motif is present at residues 158–162 (IHIID). A leucine repeat II (LRII) region spans residues 201–233 (TVKKRLEKLAKKFDVPFRFNAVSRPSCEVEVEN). A PFYRE region spans residues 242-336 (LGVNFAYMLH…QHCMARDVVN (95 aa)). An SAW region spans residues 339–413 (ACEGAERIER…RILVSSCAWK (75 aa)).

The protein belongs to the GRAS family. As to quaternary structure, interacts with Meloidogyne incognita 16D10. Expressed in seedlings, roots, cotyledons, leaves and flowers.

The protein resides in the nucleus. In terms of biological role, probable transcription factor involved in plant development. In Arabidopsis thaliana (Mouse-ear cress), this protein is Scarecrow-like protein 21 (SCL21).